Reading from the N-terminus, the 353-residue chain is S-adenosylmethionine:tRNA ribosyltransferase-isomerase (353 aa).

The protein belongs to the QueA family. Monomer.

It localises to the cytoplasm. The enzyme catalyses 7-aminomethyl-7-carbaguanosine(34) in tRNA + S-adenosyl-L-methionine = epoxyqueuosine(34) in tRNA + adenine + L-methionine + 2 H(+). Its pathway is tRNA modification; tRNA-queuosine biosynthesis. Its function is as follows. Transfers and isomerizes the ribose moiety from AdoMet to the 7-aminomethyl group of 7-deazaguanine (preQ1-tRNA) to give epoxyqueuosine (oQ-tRNA). This is S-adenosylmethionine:tRNA ribosyltransferase-isomerase from Dinoroseobacter shibae (strain DSM 16493 / NCIMB 14021 / DFL 12).